Consider the following 293-residue polypeptide: Aminodeoxychorismate lyase (293 aa).

At Lys146 the chain carries N6-(pyridoxal phosphate)lysine.

This sequence belongs to the class-IV pyridoxal-phosphate-dependent aminotransferase family. Homodimer. Requires pyridoxal 5'-phosphate as cofactor.

The enzyme catalyses 4-amino-4-deoxychorismate = 4-aminobenzoate + pyruvate + H(+). Its pathway is cofactor biosynthesis; tetrahydrofolate biosynthesis; 4-aminobenzoate from chorismate: step 2/2. Functionally, involved in the biosynthesis of p-aminobenzoate (PABA), a precursor of tetrahydrofolate. Converts 4-amino-4-deoxychorismate into 4-aminobenzoate (PABA) and pyruvate. The protein is Aminodeoxychorismate lyase of Bacillus subtilis (strain 168).